The following is a 151-amino-acid chain: Large ribosomal subunit protein uL13 (151 aa).

This sequence belongs to the universal ribosomal protein uL13 family. As to quaternary structure, part of the 50S ribosomal subunit.

Its function is as follows. This protein is one of the early assembly proteins of the 50S ribosomal subunit, although it is not seen to bind rRNA by itself. It is important during the early stages of 50S assembly. The protein is Large ribosomal subunit protein uL13 of Rippkaea orientalis (strain PCC 8801 / RF-1) (Cyanothece sp. (strain PCC 8801)).